The following is a 300-amino-acid chain: Kynurenine formamidase (300 aa).

The short motif at 86–90 (HGGYW) is the HGGXW element. Ser-157 functions as the Nucleophile in the catalytic mechanism. Catalysis depends on residues Asp-244 and His-276.

It belongs to the kynurenine formamidase family. As to quaternary structure, homodimer.

It catalyses the reaction N-formyl-L-kynurenine + H2O = L-kynurenine + formate + H(+). It functions in the pathway amino-acid degradation; L-tryptophan degradation via kynurenine pathway; L-kynurenine from L-tryptophan: step 2/2. Its function is as follows. Catalyzes the hydrolysis of N-formyl-L-kynurenine to L-kynurenine, the second step in the kynurenine pathway of tryptophan degradation. Required for elimination of toxic metabolites. In Drosophila melanogaster (Fruit fly), this protein is Kynurenine formamidase (KFase).